Consider the following 233-residue polypeptide: Large ribosomal subunit protein uL1 (233 aa).

Belongs to the universal ribosomal protein uL1 family. Part of the 50S ribosomal subunit.

Its function is as follows. Binds directly to 23S rRNA. The L1 stalk is quite mobile in the ribosome, and is involved in E site tRNA release. Protein L1 is also a translational repressor protein, it controls the translation of the L11 operon by binding to its mRNA. This is Large ribosomal subunit protein uL1 from Shewanella baltica (strain OS185).